A 209-amino-acid chain; its full sequence is MKTLVILSSILGDRSNSKQLADHLLARLKQSEPGGTVKIRDLAADPVPYFDGATVGALFTPAEARNAQQQRIAALSDDLVAELFDADRIVFAVPVYNFNLPAQFKSYIDHIARAGVTFRYTAEGKPEGLVQGKQVLVLIARGGKSEGTPDDTMTPYLKQMLAFLGMTDVTFIAAEGMAMGELAAQEGLALARQRIDALSLDARQGLAAA.

FMN-binding positions include Ser9 and 15–17 (SNS).

Belongs to the azoreductase type 1 family. As to quaternary structure, homodimer. It depends on FMN as a cofactor.

The enzyme catalyses 2 a quinone + NADH + H(+) = 2 a 1,4-benzosemiquinone + NAD(+). It carries out the reaction N,N-dimethyl-1,4-phenylenediamine + anthranilate + 2 NAD(+) = 2-(4-dimethylaminophenyl)diazenylbenzoate + 2 NADH + 2 H(+). In terms of biological role, quinone reductase that provides resistance to thiol-specific stress caused by electrophilic quinones. Its function is as follows. Also exhibits azoreductase activity. Catalyzes the reductive cleavage of the azo bond in aromatic azo compounds to the corresponding amines. The chain is FMN-dependent NADH:quinone oxidoreductase from Bordetella bronchiseptica (strain ATCC BAA-588 / NCTC 13252 / RB50) (Alcaligenes bronchisepticus).